Consider the following 464-residue polypeptide: DNA repair protein KRE29 (464 aa).

The segment at 1–69 (MGSVNSSPNE…SDEEFSSLEN (69 aa)) is disordered. Residues 53–65 (PENDSLNSDEEFS) show a composition bias toward acidic residues. Serine 81 and serine 101 each carry phosphoserine.

In terms of assembly, component of the Smc5-Smc6 complex which consists of KRE29, MMS21, NSE1, NSE3, NSE4, NSE5, SMC5 and SMC6. Interacts with NSE5.

Its subcellular location is the nucleus. It localises to the cytoplasm. Functionally, acts in a DNA repair pathway for removal of UV-induced DNA damage that is distinct from classical nucleotide excision repair and in repair of ionizing radiation damage. Functions in homologous recombination repair of DNA double strand breaks and in recovery of stalled replication forks. The protein is DNA repair protein KRE29 (KRE29) of Saccharomyces cerevisiae (strain ATCC 204508 / S288c) (Baker's yeast).